Reading from the N-terminus, the 1413-residue chain is DNA-directed RNA polymerase subunit beta' (1413 aa).

Positions 70, 72, 85, and 88 each coordinate Zn(2+). Residues Asp460, Asp462, and Asp464 each contribute to the Mg(2+) site. Zn(2+) contacts are provided by Cys814, Cys888, Cys895, and Cys898.

The protein belongs to the RNA polymerase beta' chain family. The RNAP catalytic core consists of 2 alpha, 1 beta, 1 beta' and 1 omega subunit. When a sigma factor is associated with the core the holoenzyme is formed, which can initiate transcription. Mg(2+) is required as a cofactor. Requires Zn(2+) as cofactor.

The enzyme catalyses RNA(n) + a ribonucleoside 5'-triphosphate = RNA(n+1) + diphosphate. Functionally, DNA-dependent RNA polymerase catalyzes the transcription of DNA into RNA using the four ribonucleoside triphosphates as substrates. In Buchnera aphidicola subsp. Schizaphis graminum (strain Sg), this protein is DNA-directed RNA polymerase subunit beta'.